Consider the following 488-residue polypeptide: Cysteine--tRNA ligase (488 aa).

Zn(2+) is bound at residue cysteine 40. The 'HIGH' region motif lies at 42–52 (MTVYDYCHIGH). Residues cysteine 221, histidine 246, and glutamate 250 each contribute to the Zn(2+) site. The 'KMSKS' region signature appears at 278–282 (KMSKS). Residue lysine 281 coordinates ATP.

It belongs to the class-I aminoacyl-tRNA synthetase family. Monomer. Zn(2+) is required as a cofactor.

It is found in the cytoplasm. It carries out the reaction tRNA(Cys) + L-cysteine + ATP = L-cysteinyl-tRNA(Cys) + AMP + diphosphate. This is Cysteine--tRNA ligase from Psychrobacter cryohalolentis (strain ATCC BAA-1226 / DSM 17306 / VKM B-2378 / K5).